A 367-amino-acid chain; its full sequence is UDP-galactopyranose mutase (367 aa).

FAD contacts are provided by residues Phe-12, 31 to 32 (EK), Asn-39, and 56 to 57 (HI). Phe-12 is a UDP-alpha-D-galactose binding site. Positions 80, 152, 156, and 181 each coordinate UDP-alpha-D-galactose. Residue 212-213 (DF) coordinates FAD. UDP-alpha-D-galactose contacts are provided by Asn-268, Arg-278, and Tyr-311. FAD is bound at residue Arg-340. A UDP-alpha-D-galactose-binding site is contributed by Tyr-346. Residue 347 to 352 (YDMHQV) participates in FAD binding.

Homodimer. FAD serves as cofactor.

It catalyses the reaction UDP-alpha-D-galactose = UDP-alpha-D-galactofuranose. The protein operates within bacterial outer membrane biogenesis; lipopolysaccharide biosynthesis. Its function is as follows. Catalyzes the interconversion through a 2-keto intermediate of uridine diphosphogalactopyranose (UDP-GalP) into uridine diphosphogalactofuranose (UDP-GalF). This chain is UDP-galactopyranose mutase (glf), found in Escherichia coli (strain K12).